A 62-amino-acid polypeptide reads, in one-letter code: Metallothionein-4 (62 aa).

Residues cysteine 6, cysteine 8, cysteine 14, cysteine 16, cysteine 20, cysteine 22, cysteine 25, cysteine 27, cysteine 34, cysteine 35, cysteine 37, cysteine 38, cysteine 42, cysteine 45, cysteine 49, cysteine 51, cysteine 58, cysteine 60, and cysteine 61 each coordinate a divalent metal cation.

The protein belongs to the metallothionein superfamily. Type 1 family.

In terms of biological role, seems to bind zinc and copper. Could play a special role in regulating zinc metabolism during the differentiation of stratified epithelia. This is Metallothionein-4 (MT4) from Homo sapiens (Human).